A 522-amino-acid polypeptide reads, in one-letter code: Glutathione reductase, mitochondrial (522 aa).

A mitochondrion-targeting transit peptide spans 1–43 (MALLPRALSSGGRPSWRRAARASRGFPLPLPFPAAATHALSRA). Residues S74 and G75 each contribute to the FAD site. S74 is a glutathione binding site. R81 is a binding site for glutathione. Residue E94 participates in FAD binding. K97 is modified (N6-acetyllysine). The FAD site is built by T101, C102, and K110. Cysteines 102 and 107 form a disulfide. Glutathione is bound at residue Y158. A174 is a binding site for FAD. A239, I242, E245, R262, R268, and G334 together coordinate NADP(+). Position 375 (D375) interacts with FAD. L381 provides a ligand contact to NADP(+). Position 383 (T383) interacts with FAD. R391 contributes to the glutathione binding site. Residue V414 participates in NADP(+) binding. Position 511 (H511) interacts with FAD. The active-site Proton acceptor is H511.

The protein belongs to the class-I pyridine nucleotide-disulfide oxidoreductase family. In terms of assembly, homodimer; disulfide-linked. FAD is required as a cofactor.

The protein resides in the mitochondrion. Its subcellular location is the cytoplasm. It carries out the reaction 2 glutathione + NADP(+) = glutathione disulfide + NADPH + H(+). Its function is as follows. Catalyzes the reduction of glutathione disulfide (GSSG) to reduced glutathione (GSH). Constitutes the major mechanism to maintain a high GSH:GSSG ratio in the cytosol. The polypeptide is Glutathione reductase, mitochondrial (GSR) (Callithrix jacchus (White-tufted-ear marmoset)).